Here is a 323-residue protein sequence, read N- to C-terminus: Queuosine 5'-phosphate N-glycosylase/hydrolase (323 aa).

Queuosine 5'-phosphate contacts are provided by Asn-72, Tyr-93, Lys-199, Phe-229, Asp-231, Asp-298, Trp-302, and Gln-306. Asp-231 functions as the Nucleophile or transition state stabilizer in the catalytic mechanism.

This sequence belongs to the QNG1 protein family. Monomer.

It carries out the reaction queuosine 5'-phosphate + H2O = queuine + D-ribose 5-phosphate. In terms of biological role, catalyzes the hydrolysis of queuosine 5'-phosphate, releasing the nucleobase queuine (q). Is likely required for salvage of queuine from exogenous queuosine (Q) that is imported and then converted to queuosine 5'-phosphate intracellularly. In vitro, can also catalyze the release of the q base directly from Q as substrate; however, Q may not be the biologically relevant substrate. Shows a very low activity on queuosine 3',5'-diphosphate, and cannot release q from queuosine 3'-phosphate and from the 5'-nucleotides AMP, UMP, CMP or GMP, indicating specificity for the queuine base. The polypeptide is Queuosine 5'-phosphate N-glycosylase/hydrolase (Sphaerobacter thermophilus (strain ATCC 49802 / DSM 20745 / KCCM 41009 / NCIMB 13125 / S 6022)).